A 330-amino-acid chain; its full sequence is Probable cytosolic iron-sulfur protein assembly protein ciao1-A (330 aa).

WD repeat units follow at residues 14 to 53 (HPDS…WECK), 59 to 98 (GHQR…FECL), 103 to 142 (GHEN…EYEC), 148 to 187 (SHTQ…WECR), 192 to 231 (GHTS…GGQD), 243 to 282 (FHGR…DPDQ), and 294 to 330 (AHSQ…QSEV).

It belongs to the WD repeat CIA1 family. Component of the CIA complex.

Key component of the cytosolic iron-sulfur protein assembly (CIA) complex, a multiprotein complex that mediates the incorporation of iron-sulfur cluster into extramitochondrial Fe/S proteins. The sequence is that of Probable cytosolic iron-sulfur protein assembly protein ciao1-A (ciao1a) from Salmo salar (Atlantic salmon).